A 482-amino-acid chain; its full sequence is Aspartyl/glutamyl-tRNA(Asn/Gln) amidotransferase subunit B (482 aa).

Belongs to the GatB/GatE family. GatB subfamily. Heterotrimer of A, B and C subunits.

It carries out the reaction L-glutamyl-tRNA(Gln) + L-glutamine + ATP + H2O = L-glutaminyl-tRNA(Gln) + L-glutamate + ADP + phosphate + H(+). The enzyme catalyses L-aspartyl-tRNA(Asn) + L-glutamine + ATP + H2O = L-asparaginyl-tRNA(Asn) + L-glutamate + ADP + phosphate + 2 H(+). Allows the formation of correctly charged Asn-tRNA(Asn) or Gln-tRNA(Gln) through the transamidation of misacylated Asp-tRNA(Asn) or Glu-tRNA(Gln) in organisms which lack either or both of asparaginyl-tRNA or glutaminyl-tRNA synthetases. The reaction takes place in the presence of glutamine and ATP through an activated phospho-Asp-tRNA(Asn) or phospho-Glu-tRNA(Gln). The protein is Aspartyl/glutamyl-tRNA(Asn/Gln) amidotransferase subunit B of Thermotoga sp. (strain RQ2).